We begin with the raw amino-acid sequence, 260 residues long: tRNA (guanine-N(1)-)-methyltransferase (260 aa).

Residues Gly117 and 137-142 (LGDFVL) contribute to the S-adenosyl-L-methionine site.

The protein belongs to the RNA methyltransferase TrmD family. Homodimer.

The protein localises to the cytoplasm. The catalysed reaction is guanosine(37) in tRNA + S-adenosyl-L-methionine = N(1)-methylguanosine(37) in tRNA + S-adenosyl-L-homocysteine + H(+). Its function is as follows. Specifically methylates guanosine-37 in various tRNAs. The polypeptide is tRNA (guanine-N(1)-)-methyltransferase (Cupriavidus taiwanensis (strain DSM 17343 / BCRC 17206 / CCUG 44338 / CIP 107171 / LMG 19424 / R1) (Ralstonia taiwanensis (strain LMG 19424))).